Reading from the N-terminus, the 133-residue chain is Large ribosomal subunit protein uL22 (133 aa).

This sequence belongs to the universal ribosomal protein uL22 family. As to quaternary structure, part of the 50S ribosomal subunit.

In terms of biological role, this protein binds specifically to 23S rRNA; its binding is stimulated by other ribosomal proteins, e.g. L4, L17, and L20. It is important during the early stages of 50S assembly. It makes multiple contacts with different domains of the 23S rRNA in the assembled 50S subunit and ribosome. The globular domain of the protein is located near the polypeptide exit tunnel on the outside of the subunit, while an extended beta-hairpin is found that lines the wall of the exit tunnel in the center of the 70S ribosome. This chain is Large ribosomal subunit protein uL22, found in Granulibacter bethesdensis (strain ATCC BAA-1260 / CGDNIH1).